A 337-amino-acid chain; its full sequence is Glyceraldehyde-3-phosphate dehydrogenase 1 (337 aa).

NAD(+)-binding positions include 11–12 (RI), D33, and R78. Residues 149-151 (SCT), T180, 209-210 (TG), and R232 each bind D-glyceraldehyde 3-phosphate. The active-site Nucleophile is the C150. N318 serves as a coordination point for NAD(+).

The protein belongs to the glyceraldehyde-3-phosphate dehydrogenase family. In terms of assembly, homotetramer.

It is found in the cytoplasm. It carries out the reaction D-glyceraldehyde 3-phosphate + phosphate + NAD(+) = (2R)-3-phospho-glyceroyl phosphate + NADH + H(+). Its pathway is carbohydrate degradation; glycolysis; pyruvate from D-glyceraldehyde 3-phosphate: step 1/5. In Agaricus bisporus (White button mushroom), this protein is Glyceraldehyde-3-phosphate dehydrogenase 1 (gpd1).